We begin with the raw amino-acid sequence, 217 residues long: tRNA (guanine-N(7)-)-methyltransferase (217 aa).

Positions 48, 73, 100, and 123 each coordinate S-adenosyl-L-methionine. Aspartate 123 is a catalytic residue. Substrate contacts are provided by lysine 127 and aspartate 159.

Belongs to the class I-like SAM-binding methyltransferase superfamily. TrmB family.

The enzyme catalyses guanosine(46) in tRNA + S-adenosyl-L-methionine = N(7)-methylguanosine(46) in tRNA + S-adenosyl-L-homocysteine. The protein operates within tRNA modification; N(7)-methylguanine-tRNA biosynthesis. In terms of biological role, catalyzes the formation of N(7)-methylguanine at position 46 (m7G46) in tRNA. The chain is tRNA (guanine-N(7)-)-methyltransferase from Leptospira interrogans serogroup Icterohaemorrhagiae serovar copenhageni (strain Fiocruz L1-130).